The chain runs to 555 residues: Carboxypeptidase Y homolog A (555 aa).

A signal peptide spans 1-17 (MRGLATTLLIGAAAAAT). A propeptide spanning residues 18–136 (YPAQQVLKAP…RLETFDLRVK (119 aa)) is cleaved from the precursor. Cystine bridges form between C191-C430, C325-C339, C349-C372, C356-C365, and C394-C400. N-linked (GlcNAc...) asparagine glycosylation occurs at N222. The active site involves S278. D469 is an active-site residue. N520 is a glycosylation site (N-linked (GlcNAc...) asparagine). H531 is a catalytic residue.

It belongs to the peptidase S10 family.

Its subcellular location is the vacuole. The enzyme catalyses Release of a C-terminal amino acid with broad specificity.. Vacuolar carboxypeptidase involved in degradation of small peptides. Digests preferentially peptides containing an aliphatic or hydrophobic residue in P1' position, as well as methionine, leucine or phenylalanine in P1 position of ester substrate. The chain is Carboxypeptidase Y homolog A (cpyA) from Talaromyces marneffei (strain ATCC 18224 / CBS 334.59 / QM 7333) (Penicillium marneffei).